We begin with the raw amino-acid sequence, 471 residues long: Putative multidrug resistance protein MdtD (471 aa).

Residues 1 to 11 (MTDLPDSTRWQ) lie on the Periplasmic side of the membrane. A helical membrane pass occupies residues 12-32 (LWIVAFGFFMQSLDTTIVNTA). Over 33–48 (LPSMAQSLGESPLHMH) the chain is Cytoplasmic. A helical transmembrane segment spans residues 49-69 (MVIVSYVLTVAVMLPASGWLA). Topologically, residues 70 to 76 (DKVGVRN) are periplasmic. Residues 77–97 (IFFTAIVLFTLGSLFCALSAT) traverse the membrane as a helical segment. Over 98–101 (LNEL) the chain is Cytoplasmic. Residues 102–124 (LLARALQGVGGAMMVPVGRLTVM) form a helical membrane-spanning segment. At 125–137 (KIVPREQYMAAMT) the chain is on the periplasmic side. Residues 138-158 (FVTLPGQVGPLLGPALGGLLV) traverse the membrane as a helical segment. The Cytoplasmic segment spans residues 159 to 164 (EYASWH). Residues 165-185 (WIFLINIPVGIIGAIATLMLM) form a helical membrane-spanning segment. Over 186 to 196 (PNYTMQTRRFD) the chain is Periplasmic. The helical transmembrane segment at 197-217 (LSGFLLLAVGMAVLTLALDGS) threads the bilayer. The Cytoplasmic segment spans residues 218–224 (KGTGLSP). The chain crosses the membrane as a helical span at residues 225-245 (LAIAGLAAIGVVALVLYLLHA). The Periplasmic portion of the chain corresponds to 246–262 (RNNNRALFSLKLFRTRT). A helical membrane pass occupies residues 263–283 (FSLGLAGSFAGRIGSGMLPFM). The Cytoplasmic segment spans residues 284–285 (TP). A helical transmembrane segment spans residues 286 to 306 (VFLQIGLGFSPFHAGLMMIPM). At 307–341 (VLGSMGMKRIVVQVVNRFGYRRVLVATTLGLSLVT) the chain is on the periplasmic side. The helical transmembrane segment at 342 to 362 (LLFMTTALLGWYYVLPFVLFL) threads the bilayer. The Cytoplasmic segment spans residues 363 to 395 (QGMVNSTRFSSMNTLTLKDLPDNLASSGNSLLS). Residues 396-416 (MIMQLSMSIGVTIAGLLLGLF) traverse the membrane as a helical segment. Over 417 to 430 (GSQHVSVDSSTTQT) the chain is Periplasmic. A helical membrane pass occupies residues 431–451 (VFMYTWLSMALIIALPAFIFA). The Cytoplasmic portion of the chain corresponds to 452-471 (RVPNDTHQNVAISRRKRSAQ).

Belongs to the major facilitator superfamily. TCR/Tet family.

The protein localises to the cell inner membrane. The chain is Putative multidrug resistance protein MdtD from Escherichia fergusonii (strain ATCC 35469 / DSM 13698 / CCUG 18766 / IAM 14443 / JCM 21226 / LMG 7866 / NBRC 102419 / NCTC 12128 / CDC 0568-73).